A 168-amino-acid polypeptide reads, in one-letter code: KLQLKTLLLQRAKRELEREEQERAGEKQRHLGGLCPPPELEGLGVAQLQELCRELHARIAVDEERYDMGTRVSKNMAEMEELRRRVAGGRFVRPALRRVRLSADAMMAALLGSKHRVGTDLRAGLRQVRKDDAEKESREVGDWRKNVDALSGMEGRKKKFEAPGGGQG.

Positions 128–147 (VRKDDAEKESREVGDWRKNV) are enriched in basic and acidic residues. The interval 128-168 (VRKDDAEKESREVGDWRKNVDALSGMEGRKKKFEAPGGGQG) is disordered.

It belongs to the troponin I family. As to quaternary structure, binds to actin and tropomyosin.

Troponin I is the inhibitory subunit of troponin, the thin filament regulatory complex which confers calcium-sensitivity to striated muscle actomyosin ATPase activity. The chain is Troponin I, cardiac muscle (TNNI3) from Gallus gallus (Chicken).